Reading from the N-terminus, the 666-residue chain is Protein SLY1 (666 aa).

Tandem repeats lie at residues 106 to 142 (KENI…DLAQ), 220 to 257 (KGGP…DSLE), 436 to 474 (LDIL…QNVE), and 478 to 514 (KEND…DGSD). The 4 X approximate repeats stretch occupies residues 106–514 (KENIDIIVND…QNKSLEDGSD (409 aa)).

This sequence belongs to the STXBP/unc-18/SEC1 family. In terms of assembly, interacts with SED5.

The protein resides in the cytoplasm. It is found in the membrane. Functionally, able to suppress the functional loss of YPT1. SLY1 is essential for cell viability. May interact indirectly, or directly with YPT1. This is Protein SLY1 (SLY1) from Saccharomyces cerevisiae (strain ATCC 204508 / S288c) (Baker's yeast).